Consider the following 290-residue polypeptide: MASLIDIKQRITSTRKTSQITKAMQMVSAAKLGRAESNARSYEPYVSKIKDVVTHVASTGNSNDHPMLVSRPVHRTGYIVLTSDTGLAGSYNSSVIKEVFQEINKKHTSSDEYAIITVGRSARDFFKARQMNVVLEVQGITDHPIFAEIKDIASNTVQMFEDGVYDEVFIYYNHHINSISSELRKEQLLPLTEFHEKGKEADVDLTTYEFEPSEQEILEVLLPQYVESLIFGALLDAKAAEHAARMTAMRSATDNASDLISDLSLQYNRARQAAITQEITEIVGGAAALE.

This sequence belongs to the ATPase gamma chain family. As to quaternary structure, F-type ATPases have 2 components, CF(1) - the catalytic core - and CF(0) - the membrane proton channel. CF(1) has five subunits: alpha(3), beta(3), gamma(1), delta(1), epsilon(1). CF(0) has three main subunits: a, b and c.

The protein localises to the cell membrane. Produces ATP from ADP in the presence of a proton gradient across the membrane. The gamma chain is believed to be important in regulating ATPase activity and the flow of protons through the CF(0) complex. This chain is ATP synthase gamma chain, found in Listeria welshimeri serovar 6b (strain ATCC 35897 / DSM 20650 / CCUG 15529 / CIP 8149 / NCTC 11857 / SLCC 5334 / V8).